A 236-amino-acid polypeptide reads, in one-letter code: MTRRYWNINLEEMMEAGVHFGHGTRKWNPKMAPYISAKRKGIHITNLTRTARFLSEACDLVFDAASRGKQFLIVGTKNKEADSVAWAAIRARCHYVNKKWLGGMLTNWSTTETRLHKFRDLRTEQKTGGLNRLPKRDAAMLKRQLSHLQTYLGGIKYMTGLPDIVIIVDQHEEYTPLQECITLGIPTICLIDTNCDPDLADISIPSNDYSISSIRLILNKLVFAICEGRSGYIRNS.

This sequence belongs to the universal ribosomal protein uS2 family.

It is found in the plastid. The protein resides in the chloroplast. This is Small ribosomal subunit protein uS2c (rps2) from Guizotia abyssinica (Niger).